The following is a 90-amino-acid chain: UPF0297 protein Swol_0469 (90 aa).

It belongs to the UPF0297 family.

The sequence is that of UPF0297 protein Swol_0469 from Syntrophomonas wolfei subsp. wolfei (strain DSM 2245B / Goettingen).